We begin with the raw amino-acid sequence, 187 residues long: Threonylcarbamoyl-AMP synthase (187 aa).

In terms of domain architecture, YrdC-like spans 4 to 187 (NHTDDPFLLD…GHSGQTIRDN (184 aa)). The tract at residues 168-187 (GSRSPSKIRHGHSGQTIRDN) is disordered.

It belongs to the SUA5 family. TsaC subfamily.

The protein localises to the cytoplasm. The catalysed reaction is L-threonine + hydrogencarbonate + ATP = L-threonylcarbamoyladenylate + diphosphate + H2O. Its function is as follows. Required for the formation of a threonylcarbamoyl group on adenosine at position 37 (t(6)A37) in tRNAs that read codons beginning with adenine. Catalyzes the conversion of L-threonine, HCO(3)(-)/CO(2) and ATP to give threonylcarbamoyl-AMP (TC-AMP) as the acyladenylate intermediate, with the release of diphosphate. The polypeptide is Threonylcarbamoyl-AMP synthase (Pseudoalteromonas atlantica (strain T6c / ATCC BAA-1087)).